The chain runs to 104 residues: DNA-directed RNA polymerase subunit omega (104 aa).

Residues 60–104 (VIHPDPEGKREAVRRRAEEERLRKEEEERKIKEQIAKEKEEGEKI) form a disordered region. Over residues 63-104 (PDPEGKREAVRRRAEEERLRKEEEERKIKEQIAKEKEEGEKI) the composition is skewed to basic and acidic residues.

This sequence belongs to the RNA polymerase subunit omega family. The RNAP catalytic core consists of 2 alpha, 1 beta, 1 beta' and 1 omega subunit. When a sigma factor is associated with the core the holoenzyme is formed, which can initiate transcription.

It carries out the reaction RNA(n) + a ribonucleoside 5'-triphosphate = RNA(n+1) + diphosphate. Promotes RNA polymerase assembly. Latches the N- and C-terminal regions of the beta' subunit thereby facilitating its interaction with the beta and alpha subunits. The polypeptide is DNA-directed RNA polymerase subunit omega (Streptococcus sanguinis (strain SK36)).